Here is a 310-residue protein sequence, read N- to C-terminus: GTPase Era (310 aa).

In terms of domain architecture, Era-type G spans Arg17–Glu184. Residues Gly25–Ser32 form a G1 region. Gly25–Ser32 is a binding site for GTP. Residues Gln51–Ala55 form a G2 region. A G3 region spans residues Asp72–Gly75. GTP is bound by residues Asp72–Ile76 and Asn134–Asp137. Positions Asn134 to Asp137 are G4. The G5 stretch occupies residues Ile163–Ala165. The KH type-2 domain maps to Leu215–Glu292.

The protein belongs to the TRAFAC class TrmE-Era-EngA-EngB-Septin-like GTPase superfamily. Era GTPase family. Monomer.

The protein localises to the cytoplasm. The protein resides in the cell inner membrane. Functionally, an essential GTPase that binds both GDP and GTP, with rapid nucleotide exchange. Plays a role in 16S rRNA processing and 30S ribosomal subunit biogenesis and possibly also in cell cycle regulation and energy metabolism. The protein is GTPase Era of Sinorhizobium medicae (strain WSM419) (Ensifer medicae).